An 80-amino-acid polypeptide reads, in one-letter code: RNA-binding protein Hfq (80 aa).

The Sm domain maps to 10 to 69; it reads DPFLNVLRKEHIPVSIYLVNGIKLQGHIDSFDQYVVLLRNSVTQMVYKHAISTIVPGKAV.

Belongs to the Hfq family. Homohexamer.

In terms of biological role, RNA chaperone that binds small regulatory RNA (sRNAs) and mRNAs to facilitate mRNA translational regulation in response to envelope stress, environmental stress and changes in metabolite concentrations. Also binds with high specificity to tRNAs. The protein is RNA-binding protein Hfq of Nitrosomonas eutropha (strain DSM 101675 / C91 / Nm57).